A 484-amino-acid polypeptide reads, in one-letter code: Glutamyl-tRNA(Gln) amidotransferase subunit A (484 aa).

Catalysis depends on charge relay system residues Lys-76 and Ser-151. Ser-175 serves as the catalytic Acyl-ester intermediate.

It belongs to the amidase family. GatA subfamily. Heterotrimer of A, B and C subunits.

The catalysed reaction is L-glutamyl-tRNA(Gln) + L-glutamine + ATP + H2O = L-glutaminyl-tRNA(Gln) + L-glutamate + ADP + phosphate + H(+). In terms of biological role, allows the formation of correctly charged Gln-tRNA(Gln) through the transamidation of misacylated Glu-tRNA(Gln) in organisms which lack glutaminyl-tRNA synthetase. The reaction takes place in the presence of glutamine and ATP through an activated gamma-phospho-Glu-tRNA(Gln). In Hahella chejuensis (strain KCTC 2396), this protein is Glutamyl-tRNA(Gln) amidotransferase subunit A.